A 1749-amino-acid chain; its full sequence is MESQQLSQHSPISHGSACASVTSKEVHTNQDPLDVSASKIQEYDKASTKANSQQTTTPASSAVPENPHHASPQTAQSHSPQNGPYPQQCMMTQNQANPSDWSFYGRPSMIPYTPYQMSPMYFPPGPHSQFPQYPSSVGTPLSTPSPESGNTFTDSSSADSDMTSTKKYVRPPPMLTSPNDFLNWVKTYIKFLQNSNLGGIIPTVNGKPVRQITDDELTFLYNTFQIFAPSQFLPTWVKDILSVDYTDIMKILSKSIEKMQSDTQEANDIVTLANLQYNGSTPADAFETKVTNIIDRLNNNGIHINNKVACQLIMRGLSGEYKFLRYTRHRHLNMTVAELFLDIHAIYEEQQGSRNSKPNYRRNPSDEKNDSRSYTNTTKPKVIARNPQKTNNSKSKTARAHNVSTSNNSPSTDNDSISKSTTEPIQLNNKHDLHLGQKLTESTVNHTNHSDDELPGHLLLDSGASRTLIRSAHHIHSASSNPDINVVDAQKRNIPINAIGDLQFHFQDNTKTSIKVLHTPNIAYDLLSLNELAAVDITACFTKNVLERSDGTVLAPIVKYGDFYWVSKKYLLPSNISVPTINNVHTSESTRKYPYPFIHRMLAHANAQTIRYSLKNNTITYFNESDVDWSSAIDYQCPDCLIGKSTKHRHIKGSRLKYQNSYEPFQYLHTDIFGPVHNLPKSAPSYFISFTDETTKFRWVYPLHDRREDSILDVFTTILAFIKNQFQASVLVIQMDRGSEYTNRTLHKFLEKNGITPCYTTTADSRAHGVAERLNRTLLDDCRTQLQCSGLPNHLWFSAIEFSTIVRNSLASPKSKKSARQHAGLAGLDISTLLPFGQPVIVNDHNPNSKIHPRGIPGYALHPSRNSYGYIIYLPSLKKTVDTTNYVILQGKESRLDQFNYDALTFDEDLNRLTASYQSFIASNEIQQSDDLNFQSDIELHPEQPRNVLSKAVSPTDSTPPSTHTEDSKRVSKTNIRAPREVDPNISKSDILPSKKRSSTPQISDIESTGSGGMHRLDVPLLAPMSQSNTHESSHTSKSKDFRHSDSYSDNETNHTNVPISSTGGTNNKTVPQTSEQETEKRIIHRSPSIDTSSSESNSLHHVVPIKTSDTCPKENTEESIIADLPLPDLPPEPPTKLSDSFKELPPINSRQTNSSLGGIGDSNAYTTINSKKRSLEDNETEIKVSRDTWNTKNMRSLEPPRSKKRIHLIAAVKAVKSIKPIRTTLRYDEAITYNKDIKEKEKYIEAYHKEVNQLLKMKTWDTDKYYDRKEIDPKRVINSMFIFNRKRDGTHKARFVARGDIQHPDTYDSGMQSNTVHHYALMTSLSLALDNNYYITQLDISSAYLYADIKEELYIRPPPHLGMNDKLIRLKKSLYGLKQSGANWYETIKSYLIEQCDMEEVRGWSCVFKNSQVTICLFVDDMILFSKDLNANKKIITTLKKQYDTKIINLGESDNEIQYDILGLEIKYQRSKYMKLGMEKSLTEKLPKLNVHLNPKGKKLSAPGQPGLYIDQDELEIDEDEYKEKVHEMQKLIGLASYVGYKFRFDLLYYINTLAQHILFPSRQVLDMTYELIQFMWDTRDKQLIWHKNKPTKPDNKLVAISDASYGNQPYYKSQIGNIFLLNGKVIGGKSTKASLTCTSTTEAEIHAVSEAIPLLNNLSHLVQELNKKPIIKGLLTDSRSTISIIKSTNEEKFRNRFFGTKAMRLRDEVSGNNLYVYYIETKKNIADVMTKPLPIKTFKLLTNKWIH.

4 stretches are compositionally biased toward polar residues: residues 1-23 (MESQQLSQHSPISHGSACASVTS), 48-60 (TKANSQQTTTPAS), 71-97 (SPQTAQSHSPQNGPYPQQCMMTQNQAN), and 129-152 (QFPQYPSSVGTPLSTPSPESGNTF). Disordered stretches follow at residues 1–97 (MESQ…NQAN), 129–171 (QFPQ…YVRP), and 352–421 (GSRN…SKST). The span at 153-165 (TDSSSADSDMTST) shows a compositional bias: low complexity. The segment at 299 to 401 (NNGIHINNKV…NSKSKTARAH (103 aa)) is RNA-binding. Positions 402–418 (NVSTSNNSPSTDNDSIS) are enriched in low complexity. Asp-461 acts as the For protease activity; shared with dimeric partner in catalysis. An integrase-type zinc finger-like region spans residues 583–640 (NVHTSESTRKYPYPFIHRMLAHANAQTIRYSLKNNTITYFNESDVDWSSAIDYQCPDC). The 176-residue stretch at 660–835 (NSYEPFQYLH…AGLDISTLLP (176 aa)) folds into the Integrase catalytic domain. 2 residues coordinate Mg(2+): Asp-671 and Asp-736. The segment at 945 to 1166 (PRNVLSKAVS…LGGIGDSNAY (222 aa)) is disordered. A compositionally biased stretch (low complexity) spans 954 to 963 (SPTDSTPPST). The span at 999 to 1009 (STPQISDIEST) shows a compositional bias: polar residues. Residues 1032 to 1047 (ESSHTSKSKDFRHSDS) show a composition bias toward basic and acidic residues. Composition is skewed to polar residues over residues 1048–1076 (YSDNETNHTNVPISSTGGTNNKTVPQTSE) and 1089–1100 (SIDTSSSESNSL). The Bipartite nuclear localization signal motif lies at 1172-1206 (KKRSLEDNETEIKVSRDTWNTKNMRSLEPPRSKKR). The Reverse transcriptase Ty1/copia-type domain occupies 1332–1470 (NNYYITQLDI…DILGLEIKYQ (139 aa)). The Mg(2+) site is built by Asp-1340, Asp-1421, Asp-1422, Asp-1604, Glu-1646, and Asp-1679. Residues 1604–1746 (DASYGNQPYY…IKTFKLLTNK (143 aa)) enclose the RNase H Ty1/copia-type domain.

The capsid protein forms a homotrimer, from which the VLPs are assembled. The protease is a homodimer, whose active site consists of two apposed aspartic acid residues. Post-translationally, initially, virus-like particles (VLPs) are composed of the structural unprocessed proteins Gag and Gag-Pol, and also contain the host initiator methionine tRNA (tRNA(i)-Met) which serves as a primer for minus-strand DNA synthesis, and a dimer of genomic Ty RNA. Processing of the polyproteins occurs within the particle and proceeds by an ordered pathway, called maturation. First, the protease (PR) is released by autocatalytic cleavage of the Gag-Pol polyprotein yielding capsid protein p45 and a Pol-p154 precursor protein. This cleavage is a prerequisite for subsequent processing of Pol-p154 at the remaining sites to release the mature structural and catalytic proteins. Maturation takes place prior to the RT reaction and is required to produce transposition-competent VLPs.

The protein localises to the cytoplasm. It is found in the nucleus. It carries out the reaction DNA(n) + a 2'-deoxyribonucleoside 5'-triphosphate = DNA(n+1) + diphosphate. It catalyses the reaction Endonucleolytic cleavage to 5'-phosphomonoester.. Capsid protein (CA) is the structural component of the virus-like particle (VLP), forming the shell that encapsulates the retrotransposons dimeric RNA genome. The particles are assembled from trimer-clustered units and there are holes in the capsid shells that allow for the diffusion of macromolecules. CA also has nucleocapsid-like chaperone activity, promoting primer tRNA(i)-Met annealing to the multipartite primer-binding site (PBS), dimerization of Ty1 RNA and initiation of reverse transcription. Its function is as follows. The aspartyl protease (PR) mediates the proteolytic cleavages of the Gag and Gag-Pol polyproteins after assembly of the VLP. Functionally, reverse transcriptase/ribonuclease H (RT) is a multifunctional enzyme that catalyzes the conversion of the retro-elements RNA genome into dsDNA within the VLP. The enzyme displays a DNA polymerase activity that can copy either DNA or RNA templates, and a ribonuclease H (RNase H) activity that cleaves the RNA strand of RNA-DNA heteroduplexes during plus-strand synthesis and hydrolyzes RNA primers. The conversion leads to a linear dsDNA copy of the retrotransposon that includes long terminal repeats (LTRs) at both ends. In terms of biological role, integrase (IN) targets the VLP to the nucleus, where a subparticle preintegration complex (PIC) containing at least integrase and the newly synthesized dsDNA copy of the retrotransposon must transit the nuclear membrane. Once in the nucleus, integrase performs the integration of the dsDNA into the host genome. This chain is Transposon Ty1-NL2 Gag-Pol polyprotein (TY1B-NL2), found in Saccharomyces cerevisiae (strain ATCC 204508 / S288c) (Baker's yeast).